We begin with the raw amino-acid sequence, 314 residues long: Homoserine O-acetyltransferase (314 aa).

Cys142 serves as the catalytic Acyl-thioester intermediate. Substrate contacts are provided by Lys163 and Ser192. His235 (proton acceptor) is an active-site residue. Glu237 is a catalytic residue. Substrate is bound at residue Arg249.

It belongs to the MetA family.

It is found in the cytoplasm. The catalysed reaction is L-homoserine + acetyl-CoA = O-acetyl-L-homoserine + CoA. The protein operates within amino-acid biosynthesis; L-methionine biosynthesis via de novo pathway; O-acetyl-L-homoserine from L-homoserine: step 1/1. Its function is as follows. Transfers an acetyl group from acetyl-CoA to L-homoserine, forming acetyl-L-homoserine. This chain is Homoserine O-acetyltransferase, found in Streptococcus pneumoniae serotype 4 (strain ATCC BAA-334 / TIGR4).